The chain runs to 121 residues: Basic phospholipase A2 homolog BnSP-7 (121 aa).

Intrachain disulfides connect Cys-26–Cys-115, Cys-28–Cys-44, Cys-43–Cys-95, Cys-49–Cys-121, Cys-50–Cys-88, Cys-57–Cys-81, and Cys-75–Cys-86. The important for membrane-damaging activities in eukaryotes and bacteria; heparin-binding stretch occupies residues 105–117; it reads KKYRYHLKPFCKK.

It belongs to the phospholipase A2 family. Group II subfamily. K49 sub-subfamily. As to quaternary structure, homodimer; non-covalently linked (probable alternative/compact dimer conformation in solution). Expressed by the venom gland.

The protein localises to the secreted. Heparin inhibits the neuromuscular effect, myotoxin activity and edema-inducing effects. Bromophenacyl bromide (BPB) inhibits the neuromuscular effect, the myotoxin activity and edema-inducing effects. Snake venom phospholipase A2 (PLA2) that lacks enzymatic activity. Is myotoxic and displays edema-inducing activity. Displays bactericidal activity and promotes the blockage of the neuromuscular contraction of the chick biventer cervicis muscle. Also disrupts artificial membranes, and provokes tissue damages characterized by edema, necrosis and inflammation. May act as pro-inflammatory mediators, inducing metalloproteinase and cytokine production from the inflammatory and satellite cells. A model of myotoxic mechanism has been proposed: an apo Lys49-PLA2 is activated by the entrance of a hydrophobic molecule (e.g. fatty acid) at the hydrophobic channel of the protein leading to a reorientation of a monomer. This reorientation causes a transition between 'inactive' to 'active' states, causing alignment of C-terminal and membrane-docking sites (MDoS) side-by-side and putting the membrane-disruption sites (MDiS) in the same plane, exposed to solvent and in a symmetric position for both monomers. The MDoS region stabilizes the toxin on membrane by the interaction of charged residues with phospholipid head groups. Subsequently, the MDiS region destabilizes the membrane with penetration of hydrophobic residues. This insertion causes a disorganization of the membrane, allowing an uncontrolled influx of ions (i.e. calcium and sodium), and eventually triggering irreversible intracellular alterations and cell death. The protein is Basic phospholipase A2 homolog BnSP-7 of Bothrops pauloensis (Neuwied's lancehead).